The following is a 436-amino-acid chain: GTPase Der (436 aa).

EngA-type G domains are found at residues 4–167 and 176–351; these read PVVA…PKGG and IKFC…DNHA. Residues 10–17, 57–61, 119–122, 182–189, 229–233, and 294–297 each bind GTP; these read GRPNVGKS, DTGGI, NKID, DTAGM, and NKWD. Positions 352 to 436 constitute a KH-like domain; sequence MRVQTNVLNE…PIKIIARPRK (85 aa).

This sequence belongs to the TRAFAC class TrmE-Era-EngA-EngB-Septin-like GTPase superfamily. EngA (Der) GTPase family. Associates with the 50S ribosomal subunit.

Functionally, GTPase that plays an essential role in the late steps of ribosome biogenesis. The chain is GTPase Der from Geobacillus kaustophilus (strain HTA426).